Here is a 240-residue protein sequence, read N- to C-terminus: Uridylate kinase (240 aa).

Residue 13–16 (KLSG) coordinates ATP. The interval 21 to 26 (GEQGYG) is involved in allosteric activation by GTP. UMP is bound at residue glycine 55. Positions 56 and 60 each coordinate ATP. UMP is bound by residues aspartate 75 and 137–144 (TGNPFFST). Residues threonine 164, tyrosine 170, and aspartate 173 each coordinate ATP.

This sequence belongs to the UMP kinase family. In terms of assembly, homohexamer.

It localises to the cytoplasm. The enzyme catalyses UMP + ATP = UDP + ADP. It functions in the pathway pyrimidine metabolism; CTP biosynthesis via de novo pathway; UDP from UMP (UMPK route): step 1/1. With respect to regulation, allosterically activated by GTP. Inhibited by UTP. Its function is as follows. Catalyzes the reversible phosphorylation of UMP to UDP. This Aquifex aeolicus (strain VF5) protein is Uridylate kinase.